A 266-amino-acid chain; its full sequence is Apolipoprotein A-I (266 aa).

Residues 1–18 form the signal peptide; that stretch reads MKAVVLTLAVLFLTGSQA. 2 tandem repeats follow at residues 67–88 and 89–110. Residues 67 to 266 form a 10 X approximate tandem repeats region; the sequence is LKLLDNWDTL…DEATKKLNAQ (200 aa). Met-109 is modified (methionine sulfoxide). The stretch at 111 to 121 is one 3; half-length repeat; sequence KDLEEVKQKVQ. A run of 5 repeats spans residues 122–143, 144–165, 166–187, 188–209, and 210–231. A 9; half-length repeat occupies 232-242; it reads PALEDLRQGLL. Repeat 10 spans residues 243–266; the sequence is PVLESFKVGLMAIVDEATKKLNAQ.

The protein belongs to the apolipoprotein A1/A4/E family. Homodimer. Interacts with APOA1BP and CLU. Component of a sperm activating protein complex (SPAP), consisting of APOA1, an immunoglobulin heavy chain, an immunoglobulin light chain and albumin. Interacts with NDRG1. Interacts with SCGB3A2. Interacts with NAXE and YJEFN3. Post-translationally, glycosylated. Palmitoylated. In terms of processing, phosphorylation sites are present in the extracellular medium.

The protein localises to the secreted. Participates in the reverse transport of cholesterol from tissues to the liver for excretion by promoting cholesterol efflux from tissues and by acting as a cofactor for the lecithin cholesterol acyltransferase (LCAT). As part of the SPAP complex, activates spermatozoa motility. In Acinonyx jubatus (Cheetah), this protein is Apolipoprotein A-I (APOA1).